The chain runs to 100 residues: Large ribosomal subunit protein eL30 (100 aa).

This sequence belongs to the eukaryotic ribosomal protein eL30 family.

The sequence is that of Large ribosomal subunit protein eL30 from Methanococcus maripaludis (strain DSM 14266 / JCM 13030 / NBRC 101832 / S2 / LL).